Here is a 113-residue protein sequence, read N- to C-terminus: Defense protein 2 (113 aa).

Belongs to the attacin/sarcotoxin-2 family.

Its subcellular location is the secreted. In terms of biological role, has antibacterial activity against both Gram-positive and Gram-negative bacteria. In Lonomia obliqua (Moth), this protein is Defense protein 2.